The sequence spans 387 residues: uncharacterized protein (387 aa).

Belongs to the geranylgeranyl reductase family. ChlP subfamily.

This is an uncharacterized protein from Methanosarcina barkeri (strain Fusaro / DSM 804).